Consider the following 360-residue polypeptide: S-adenosylmethionine:tRNA ribosyltransferase-isomerase (360 aa).

The protein belongs to the QueA family. As to quaternary structure, monomer.

It localises to the cytoplasm. The catalysed reaction is 7-aminomethyl-7-carbaguanosine(34) in tRNA + S-adenosyl-L-methionine = epoxyqueuosine(34) in tRNA + adenine + L-methionine + 2 H(+). It functions in the pathway tRNA modification; tRNA-queuosine biosynthesis. Functionally, transfers and isomerizes the ribose moiety from AdoMet to the 7-aminomethyl group of 7-deazaguanine (preQ1-tRNA) to give epoxyqueuosine (oQ-tRNA). The protein is S-adenosylmethionine:tRNA ribosyltransferase-isomerase of Rhodopseudomonas palustris (strain BisB5).